We begin with the raw amino-acid sequence, 411 residues long: Translation initiation factor 2 subunit gamma (411 aa).

Positions 9-203 (QAEVNIGMVG…AIEEFIPTPK (195 aa)) constitute a tr-type G domain. Residues 18 to 25 (GHVDHGKT) are G1. Mg(2+) is bound by residues aspartate 21, threonine 25, glycine 46, and threonine 48. 21 to 26 (DHGKTT) lines the GTP pocket. Positions 46–50 (GITIK) are G2. 4 residues coordinate Zn(2+): cysteine 61, cysteine 64, cysteine 73, and cysteine 76. A G3 region spans residues 90-93 (DSPG). GTP is bound by residues 146–149 (NKIE) and 181–183 (SAL). Positions 146–149 (NKIE) are G4. A G5 region spans residues 181-183 (SAL).

The protein belongs to the TRAFAC class translation factor GTPase superfamily. Classic translation factor GTPase family. EIF2G subfamily. Heterotrimer composed of an alpha, a beta and a gamma chain. It depends on Mg(2+) as a cofactor.

It carries out the reaction GTP + H2O = GDP + phosphate + H(+). Its function is as follows. eIF-2 functions in the early steps of protein synthesis by forming a ternary complex with GTP and initiator tRNA. In Pyrococcus furiosus (strain ATCC 43587 / DSM 3638 / JCM 8422 / Vc1), this protein is Translation initiation factor 2 subunit gamma.